We begin with the raw amino-acid sequence, 309 residues long: Taste receptor type 2 member 20 (309 aa).

The Extracellular segment spans residues 1–6 (MMSFLH). A helical transmembrane segment spans residues 7–27 (IVFSILVVVAFILGNFANGFI). Topologically, residues 28-46 (ALINFIAWVKRQKISSADQ) are cytoplasmic. The chain crosses the membrane as a helical span at residues 47 to 67 (IIAALAVSRVGLLWVILLHWY). The Extracellular portion of the chain corresponds to 68 to 79 (STVLNPTSSNLK). Residues 80–100 (VIIFISNAWAVTNHFSIWLAT) traverse the membrane as a helical segment. At 101–125 (SLSIFYLLKIVNFSRLIFHHLKRKA) the chain is on the cytoplasmic side. A helical membrane pass occupies residues 126 to 146 (KSVVLVIVLGSLFFLVCXLVM). At 147-178 (KNTYINVWTEECEGNVTWKIKLRNAMHLSNLT) the chain is on the extracellular side. Residues 179–199 (VAMLANLIPFTLTLISFLLLI) form a helical membrane-spanning segment. Residues 200–229 (YSLCKHLKKMQLHGKGSQDPSTKIHIKALQ) lie on the Cytoplasmic side of the membrane. A helical transmembrane segment spans residues 230–250 (TVTSFLILLAIYFLCLITSFW). Topologically, residues 251 to 259 (NSKMRPKEI) are extracellular. The helical transmembrane segment at 260-280 (VLMLCQAFGIIYPSFHSFILI) threads the bilayer. Over 281–309 (WGNKTLKQTFLSVLWQVTCWAKGQNQSTP) the chain is Cytoplasmic.

It belongs to the G-protein coupled receptor T2R family.

The protein resides in the membrane. Receptor that may play a role in the perception of bitterness and is gustducin-linked. May play a role in sensing the chemical composition of the gastrointestinal content. The activity of this receptor may stimulate alpha gustducin, mediate PLC-beta-2 activation and lead to the gating of TRPM5. The sequence is that of Taste receptor type 2 member 20 (TAS2R20) from Pan troglodytes (Chimpanzee).